A 138-amino-acid polypeptide reads, in one-letter code: Small ribosomal subunit protein uS11 (138 aa).

It belongs to the universal ribosomal protein uS11 family. Part of the 30S ribosomal subunit.

Functionally, located on the platform of the 30S subunit. This Pyrobaculum arsenaticum (strain DSM 13514 / JCM 11321 / PZ6) protein is Small ribosomal subunit protein uS11.